A 759-amino-acid polypeptide reads, in one-letter code: Phosphoribosylformylglycinamidine synthase subunit PurL (759 aa).

H46 is an active-site residue. 2 residues coordinate ATP: Y49 and K88. Mg(2+) is bound at residue E90. Residues S91–H94 and R113 each bind substrate. Catalysis depends on H92, which acts as the Proton acceptor. Mg(2+) is bound at residue D114. A substrate-binding site is contributed by Q237. Residue D265 coordinates Mg(2+). E309 to Q311 contacts substrate. The ATP site is built by D498 and G535. Residue N536 coordinates Mg(2+). S538 is a substrate binding site.

Belongs to the FGAMS family. As to quaternary structure, monomer. Part of the FGAM synthase complex composed of 1 PurL, 1 PurQ and 2 PurS subunits.

The protein resides in the cytoplasm. It catalyses the reaction N(2)-formyl-N(1)-(5-phospho-beta-D-ribosyl)glycinamide + L-glutamine + ATP + H2O = 2-formamido-N(1)-(5-O-phospho-beta-D-ribosyl)acetamidine + L-glutamate + ADP + phosphate + H(+). It functions in the pathway purine metabolism; IMP biosynthesis via de novo pathway; 5-amino-1-(5-phospho-D-ribosyl)imidazole from N(2)-formyl-N(1)-(5-phospho-D-ribosyl)glycinamide: step 1/2. Part of the phosphoribosylformylglycinamidine synthase complex involved in the purines biosynthetic pathway. Catalyzes the ATP-dependent conversion of formylglycinamide ribonucleotide (FGAR) and glutamine to yield formylglycinamidine ribonucleotide (FGAM) and glutamate. The FGAM synthase complex is composed of three subunits. PurQ produces an ammonia molecule by converting glutamine to glutamate. PurL transfers the ammonia molecule to FGAR to form FGAM in an ATP-dependent manner. PurS interacts with PurQ and PurL and is thought to assist in the transfer of the ammonia molecule from PurQ to PurL. The polypeptide is Phosphoribosylformylglycinamidine synthase subunit PurL (Anaeromyxobacter dehalogenans (strain 2CP-C)).